The sequence spans 492 residues: 2,3-bisphosphoglycerate-independent phosphoglycerate mutase (492 aa).

Asp-11 and Ser-61 together coordinate Mn(2+). Catalysis depends on Ser-61, which acts as the Phosphoserine intermediate. Substrate-binding positions include His-118, 147 to 148 (RD), Arg-178, Arg-184, 248 to 251 (RNDR), and Lys-320. Asp-386, His-390, Asp-427, His-428, and His-445 together coordinate Mn(2+).

It belongs to the BPG-independent phosphoglycerate mutase family. Monomer. Mn(2+) serves as cofactor.

It carries out the reaction (2R)-2-phosphoglycerate = (2R)-3-phosphoglycerate. The protein operates within carbohydrate degradation; glycolysis; pyruvate from D-glyceraldehyde 3-phosphate: step 3/5. Functionally, catalyzes the interconversion of 2-phosphoglycerate and 3-phosphoglycerate. The polypeptide is 2,3-bisphosphoglycerate-independent phosphoglycerate mutase (Campylobacter jejuni subsp. jejuni serotype O:23/36 (strain 81-176)).